The chain runs to 347 residues: Phosphoribosylformylglycinamidine cyclo-ligase (347 aa).

Belongs to the AIR synthase family.

It is found in the cytoplasm. It carries out the reaction 2-formamido-N(1)-(5-O-phospho-beta-D-ribosyl)acetamidine + ATP = 5-amino-1-(5-phospho-beta-D-ribosyl)imidazole + ADP + phosphate + H(+). It participates in purine metabolism; IMP biosynthesis via de novo pathway; 5-amino-1-(5-phospho-D-ribosyl)imidazole from N(2)-formyl-N(1)-(5-phospho-D-ribosyl)glycinamide: step 2/2. This Prochlorococcus marinus (strain MIT 9312) protein is Phosphoribosylformylglycinamidine cyclo-ligase.